The following is a 131-amino-acid chain: M-zodatoxin-Lt8m (131 aa).

The N-terminal stretch at 1–20 (MKYFVVALALVAAFACIAES) is a signal peptide. A propeptide spanning residues 21 to 60 (KPAESEHELAEVEEENELADLEDAVWLEHLADLSDLEEAR) is cleaved from the precursor.

Belongs to the cationic peptide 06 (cytoinsectotoxin) family. In terms of tissue distribution, expressed by the venom gland.

Its subcellular location is the secreted. Insecticidal, cytolytic and antimicrobial peptide. Forms voltage-dependent, ion-permeable channels in membranes. At high concentration causes cell membrane lysis. The protein is M-zodatoxin-Lt8m (cit 1-13) of Lachesana tarabaevi (Spider).